The following is a 262-amino-acid chain: Hydroxyethylthiazole kinase (262 aa).

M50 contributes to the substrate binding site. Residues R125 and T171 each contribute to the ATP site. Substrate is bound at residue G198.

This sequence belongs to the Thz kinase family. Mg(2+) is required as a cofactor.

The enzyme catalyses 5-(2-hydroxyethyl)-4-methylthiazole + ATP = 4-methyl-5-(2-phosphooxyethyl)-thiazole + ADP + H(+). Its pathway is cofactor biosynthesis; thiamine diphosphate biosynthesis; 4-methyl-5-(2-phosphoethyl)-thiazole from 5-(2-hydroxyethyl)-4-methylthiazole: step 1/1. Catalyzes the phosphorylation of the hydroxyl group of 4-methyl-5-beta-hydroxyethylthiazole (THZ). The polypeptide is Hydroxyethylthiazole kinase (Shigella sonnei (strain Ss046)).